A 167-amino-acid polypeptide reads, in one-letter code: Small ribosomal subunit protein uS5 (167 aa).

In terms of domain architecture, S5 DRBM spans 11–74 (LQEKLIAVNR…DKARRNMTTI (64 aa)).

Belongs to the universal ribosomal protein uS5 family. In terms of assembly, part of the 30S ribosomal subunit. Contacts proteins S4 and S8.

Its function is as follows. With S4 and S12 plays an important role in translational accuracy. Functionally, located at the back of the 30S subunit body where it stabilizes the conformation of the head with respect to the body. The polypeptide is Small ribosomal subunit protein uS5 (Baumannia cicadellinicola subsp. Homalodisca coagulata).